A 133-amino-acid polypeptide reads, in one-letter code: Profilin-3 (133 aa).

Belongs to the profilin family. In terms of assembly, occurs in many kinds of cells as a complex with monomeric actin in a 1:1 ratio.

Its subcellular location is the cytoplasm. The protein localises to the cytoskeleton. Functionally, binds to actin and affects the structure of the cytoskeleton. At high concentrations, profilin prevents the polymerization of actin, whereas it enhances it at low concentrations. By binding to PIP2, it inhibits the formation of IP3 and DG. The polypeptide is Profilin-3 (Ambrosia artemisiifolia (Common ragweed)).